The chain runs to 392 residues: Probable protein phosphatase 2C 22 (392 aa).

The interval 1–26 (MEETRGISDPENGSSSYGGKPPNPLS) is disordered. One can recognise a PPM-type phosphatase domain in the interval 89-356 (RSGAWSDIGS…DNVTAVVVCL (268 aa)). Aspartate 133, glycine 134, aspartate 304, and aspartate 347 together coordinate Mn(2+).

It belongs to the PP2C family. Mg(2+) serves as cofactor. The cofactor is Mn(2+).

The catalysed reaction is O-phospho-L-seryl-[protein] + H2O = L-seryl-[protein] + phosphate. The enzyme catalyses O-phospho-L-threonyl-[protein] + H2O = L-threonyl-[protein] + phosphate. This is Probable protein phosphatase 2C 22 from Arabidopsis thaliana (Mouse-ear cress).